An 888-amino-acid chain; its full sequence is C2H2 zinc finger transcription factor sltA (888 aa).

Disordered regions lie at residues 1–78, 132–176, and 388–407; these read MSTS…QRSP, IDSQ…SSEN, and RSSMPSNREPAQNGAKASAP. Composition is skewed to polar residues over residues 23–32, 167–176, and 388–397; these read PSLSASTSIE, GLGTSLSSEN, and RSSMPSNREP. C2H2-type zinc fingers lie at residues 500–522 and 561–586; these read QKCKDCDKVFKRPCDLTKHEKTH and YKCKFAPCTYSSKRESNCKQHMEKAH. Residues 589 to 663 form a disordered region; that stretch reads DYVRSKHNGR…PTQTGSGDFP (75 aa). Residues 602–632 show a composition bias toward polar residues; that stretch reads KASNGATPQTPSIATPSSKAQGITTPLTGSE.

Its subcellular location is the nucleus. Transcription factor that contributes to azole resistance by coregulating the expression of the drug target erg11A and the drug efflux pump mdr1. Binds to the 5'-AGGCA-3' motif in the promoters of ergosterol biosynthesis and drug pump genes to regulate their expression. Is able to interact with the promoters of sltA, sltB, erg11A, erg13A, erg24A, mdr1, abcE and mfsC. Involved in antifungal drug resistance to azoles, terbinafine, and simvastatin but not amphotericin B or caspofungin. The protein is C2H2 zinc finger transcription factor sltA of Aspergillus fumigatus (strain CBS 144.89 / FGSC A1163 / CEA10) (Neosartorya fumigata).